A 185-amino-acid polypeptide reads, in one-letter code: Der GTPase-activating protein YihI (185 aa).

2 disordered regions span residues 1-74 and 145-169; these read MGRS…KKKI and EPED…SSDE. Over residues 23-33 the composition is skewed to basic and acidic residues; sequence NRSESDVEGRE. Basic residues predominate over residues 34–47; it reads RKRVKKRKGLKSGS. A compositionally biased stretch (basic and acidic residues) spans 48-68; sequence RHSDGSEAKQRKAALARDPRL. Residues 145–155 show a composition bias toward acidic residues; the sequence is EPEDDEEEIFE.

The protein belongs to the YihI family. As to quaternary structure, interacts with Der.

A GTPase-activating protein (GAP) that modifies Der/EngA GTPase function. May play a role in ribosome biogenesis. The polypeptide is Der GTPase-activating protein YihI (Vibrio atlanticus (strain LGP32) (Vibrio splendidus (strain Mel32))).